Here is a 176-residue protein sequence, read N- to C-terminus: Flavodoxin 1 (176 aa).

The 162-residue stretch at 4-165 (TGIFFGSDTG…RVEKWVKQVS (162 aa)) folds into the Flavodoxin-like domain.

It belongs to the flavodoxin family. FMN is required as a cofactor.

Low-potential electron donor to a number of redox enzymes (Potential). Involved in the reactivation of inactive cob(II)alamin in methionine synthase. The sequence is that of Flavodoxin 1 (fldA) from Salmonella typhimurium (strain LT2 / SGSC1412 / ATCC 700720).